A 279-amino-acid polypeptide reads, in one-letter code: Aldo-keto reductase Mvan_2161 (279 aa).

The active-site Proton donor is the Tyr-54. 9 residues coordinate NADPH: Leu-194, Val-196, Ile-232, Arg-234, Ser-235, Arg-240, Ser-243, Asn-244, and Arg-270.

It belongs to the aldo/keto reductase family.

The protein is Aldo-keto reductase Mvan_2161 of Mycolicibacterium vanbaalenii (strain DSM 7251 / JCM 13017 / BCRC 16820 / KCTC 9966 / NRRL B-24157 / PYR-1) (Mycobacterium vanbaalenii).